The sequence spans 158 residues: MLLLDCNPEVDSLKHLLETGASVNAPPDPCEQSPVHLAAGGGLACFLLWQLQTGADLNQQDVFGEAPLHKAARVGSMECLSLLVASDAQIDLCNKNGQTAEDLAWSCGFPECAKFLTTIKCMQTIKSREQPNKDHCVQVLRLKRSFGSEEYTSGKRKC.

ANK repeat units lie at residues 1-25, 30-59, and 63-92; these read MLLLDCNPEVDSLKHLLETGASVNA, CEQSPVHLAAGGGLACFLLWQLQTGADLNQ, and FGEAPLHKAARVGSMECLSLLVASDAQIDL. The Nuclear localization signal motif lies at 129-149; sequence EQPNKDHCVQVLRLKRSFGSE.

Ubiquitinated by the CRL2(FEM1B) complex, leading to its degradation.

The protein localises to the nucleus. It is found in the cytoplasm. In Bos taurus (Bovine), this protein is Ankyrin repeat domain-containing protein 37 (ANKRD37).